Here is a 506-residue protein sequence, read N- to C-terminus: Protein EFFECTOR OF TRANSCRIPTION 1 (506 aa).

The region spanning 185–225 is the GIY-YIG domain; it reads AFQGLYELSHDHGRKDDVLVANLGQPESIRSRLRSYSRSFA. A compositionally biased stretch (polar residues) spans 234-247; it reads LSQTILPTTQNKSD. Residues 234–298 form a disordered region; that stretch reads LSQTILPTTQ…VSEKHDDIVD (65 aa). Residues 248–272 show a composition bias toward basic and acidic residues; sequence NQTEEKKSDSEEEREVSSDAAEKES. Residues 273–288 are compositionally biased toward low complexity; the sequence is NSLPSILRLSRSRPQP. Cx9Cx9RCx2HK repeat units lie at residues 306 to 331 and 361 to 386; these read CGVL…TEHK and CGVI…EDHK. Over residues 404-413 the composition is skewed to basic and acidic residues; that stretch reads KAVNEDKSKP. The disordered stretch occupies residues 404–426; sequence KAVNEDKSKPETSTGMNQEGSGL. The segment covering 414 to 423 has biased composition (polar residues); it reads ETSTGMNQEG. Cx9Cx9RCx2HK repeat units lie at residues 428–453 and 475–500; these read CEAT…WQHK and CGFK…EEHK.

In terms of tissue distribution, expressed in rosette leaves, stipules, stems, flowers, siliques and mature seeds. Expressed in the vascular bundles of xylem in shoot parenchyma cells. Expressed in the remnant cytoplasm of differentiated fiber cells and in protoxylem element of parenchymal cells.

The protein resides in the cytoplasm. It localises to the nucleus. Its function is as follows. Transcriptional regulator involved in the regulation of cell differentiation in meristems. Binds DNA without sequence preference. The protein is Protein EFFECTOR OF TRANSCRIPTION 1 of Arabidopsis thaliana (Mouse-ear cress).